Reading from the N-terminus, the 281-residue chain is Phosphate import ATP-binding protein PstB (281 aa).

The region spanning 33–276 is the ABC transporter domain; that stretch reads FKIENLSLWY…PQLKRTRDYI (244 aa). 67 to 74 serves as a coordination point for ATP; sequence GPSGCGKS.

The protein belongs to the ABC transporter superfamily. Phosphate importer (TC 3.A.1.7) family. As to quaternary structure, the complex is composed of two ATP-binding proteins (PstB), two transmembrane proteins (PstC and PstA) and a solute-binding protein (PstS).

It localises to the cell membrane. The enzyme catalyses phosphate(out) + ATP + H2O = ADP + 2 phosphate(in) + H(+). In terms of biological role, part of the ABC transporter complex PstSACB involved in phosphate import. Responsible for energy coupling to the transport system. The protein is Phosphate import ATP-binding protein PstB of Mycoplasma mobile (strain ATCC 43663 / 163K / NCTC 11711) (Mesomycoplasma mobile).